The following is a 138-amino-acid chain: Large ribosomal subunit protein bL19 (138 aa).

This sequence belongs to the bacterial ribosomal protein bL19 family.

In terms of biological role, this protein is located at the 30S-50S ribosomal subunit interface and may play a role in the structure and function of the aminoacyl-tRNA binding site. The sequence is that of Large ribosomal subunit protein bL19 from Rickettsia rickettsii (strain Iowa).